Here is a 178-residue protein sequence, read N- to C-terminus: Probable inosine/xanthosine triphosphatase (178 aa).

It belongs to the YjjX NTPase family. In terms of assembly, homodimer. Mg(2+) is required as a cofactor. It depends on Mn(2+) as a cofactor.

The enzyme catalyses XTP + H2O = XDP + phosphate + H(+). The catalysed reaction is ITP + H2O = IDP + phosphate + H(+). In terms of biological role, phosphatase that hydrolyzes non-canonical purine nucleotides such as XTP and ITP to their respective diphosphate derivatives. Probably excludes non-canonical purines from DNA/RNA precursor pool, thus preventing their incorporation into DNA/RNA and avoiding chromosomal lesions. The polypeptide is Probable inosine/xanthosine triphosphatase (Pyrobaculum aerophilum (strain ATCC 51768 / DSM 7523 / JCM 9630 / CIP 104966 / NBRC 100827 / IM2)).